A 264-amino-acid polypeptide reads, in one-letter code: MTIPYTPGRLDGKVALVTGSGRGIGAAIAIQLGRLGAKVVVNYANSAEHAEKVVAEIKAHGSDAVAFKADMRRVAETAKLFDDAVAHFGHLDIAVSNSGVVSFGHLKDVTEEEFDRVFSLNTRGQFFVAREAYRVLSEGGRIILTSSNTSKDFSVPRHSVYSGSKGAIDSFVRILSKDCGDKKITVNGVAPGGTVTDMFHAVSHHYIPNGEKFTAEERQQMAAHASPLHRNGFPEDIANVVGFLVSKEGEWVNGKVITLDGGAA.

Positions 24, 70, 97, and 130 each coordinate NADP(+). Catalysis depends on proton donor residues serine 146 and serine 147. NADP(+) contacts are provided by tyrosine 161, lysine 165, and threonine 196. Catalysis depends on tyrosine 161, which acts as the Proton acceptor. Lysine 165 functions as the Lowers pKa of active site Tyr in the catalytic mechanism.

Belongs to the short-chain dehydrogenases/reductases (SDR) family.

It functions in the pathway secondary metabolite biosynthesis. Its function is as follows. Short chain dehydrogenase/reductase; part of the gene cluster that mediates the biosynthesis of the tetrahydroxanthone dimer neosartorin, which exhibits antibacterial activity. The two different monomeric units appear to be synthesized by the same set of enzymes, among which the Baeyer-Villiger monooxygenase nsrF is the key enzyme for the divergence of the biosynthetic routes. The pathway begins with the synthesis of atrochrysone thioester by the polyketide synthase nsrB. The atrochrysone carboxyl ACP thioesterase nsrC then breaks the thioester bond and releases the atrochrysone carboxylic acid from AacuL. Atrochrysone carboxylic acid is decarboxylated by the decarboxylase nsrE, and oxidized by the anthrone oxygenase nsrD to yield emodin. Emodin is then reduced to emodin hydroquinone by the oxidoreductase nsrR. A-ring reduction by the short chain dehydrogenase nsrJ, dehydration by the scytalone dehydratase-like protein nsrI and probable spontaneous re-oxidation, results in overall deoxygenation to chrysophanol. The Baeyer-Villiger monooxygenase nsrF accepts chrysophanol as a substrate to insert one oxygen atom at two different positions to yield the precursors of both monomric units. NsrF is promiscuous/flexible in interacting with the 2 (non methylated and methylated) aromatic rings of chrysophanol, thus diverging the biosynthetic pathway at this point. After the hydrolysis of the lactones, methylesterification by the methyltransferase nsrG yields respectively moniliphenone and 2,2',6'-trihydroxy-4-methyl-6-methoxya-cyldiphenylmethanone. The next steps are the hydroxylation by the FAD-dependent monooxygenase nsrK, followed by isomerization by the monooxygenase nsrQ. The short chain dehydrogenase/reductase nsrO then catalyzes the C-5 ketoreduction to give the xanthone skeleton of blennolide C and 5-acetylblennolide A. The acetyltransferase nsrL has a strict substrate specificity and uses only blennolide A but not blennolide C to yield 5-acetylblennolide A as the single-acetylated product. In the final step of the biosynthesis, the heterodimerization of the 2 xanthones, blennolide C and 5-acetylblennolide A, is catalyzed by the cytochrome P450 monooxygenase nsrP. NsrP can utilize at least three different xanthones as its substrates to perform the dimerization reaction. In Aspergillus novofumigatus (strain IBT 16806), this protein is Short chain dehydrogenase/reductase nsrJ.